Reading from the N-terminus, the 229-residue chain is Large ribosomal subunit protein uL1c (229 aa).

Belongs to the universal ribosomal protein uL1 family. In terms of assembly, part of the 50S ribosomal subunit.

The protein resides in the plastid. The protein localises to the chloroplast. Its function is as follows. Binds directly to 23S rRNA. Might be involved in E site tRNA release (Potential). This is Large ribosomal subunit protein uL1c (rpl1) from Porphyra purpurea (Red seaweed).